The chain runs to 69 residues: MNQPSLDKLMEKVDSKYTLVVLAAKRARALVEKQAPLVSVAKSAKPVSIALHEIVDGKVSYRQAKGGIK.

It belongs to the RNA polymerase subunit omega family. As to quaternary structure, the RNAP catalytic core consists of 2 alpha, 1 beta, 1 beta' and 1 omega subunit. When a sigma factor is associated with the core the holoenzyme is formed, which can initiate transcription.

It carries out the reaction RNA(n) + a ribonucleoside 5'-triphosphate = RNA(n+1) + diphosphate. In terms of biological role, promotes RNA polymerase assembly. Latches the N- and C-terminal regions of the beta' subunit thereby facilitating its interaction with the beta and alpha subunits. The chain is DNA-directed RNA polymerase subunit omega from Heliobacterium modesticaldum (strain ATCC 51547 / Ice1).